A 1009-amino-acid chain; its full sequence is Anillin-like protein 2 (1009 aa).

Disordered regions lie at residues 1–29 (MYRRENINFSHPPQLKSPPPMSSPLDSNR), 272–295 (FGQEESVRASPMSRRNRRGTQTIV), and 539–558 (GTGYSASSSGPQFTRSPTLV). Residues 542 to 557 (YSASSSGPQFTRSPTL) show a composition bias toward polar residues. A coiled-coil region spans residues 626 to 657 (SAADKINDSKRQISKLIETIEKTRKHIQLAEI). A PH domain is found at 892-1005 (DVEYRGFLYL…WLNAINDTLF (114 aa)).

Localizes to the surface of the rachis.

Its function is as follows. Required to maintain the structure of the rachis, the central cytoplasmic core of the syncytial adult gonad. Failure to maintain the rachis leads to premature dissociation of oocytes and thereby impedes oogenesis. This Caenorhabditis elegans protein is Anillin-like protein 2 (ani-2).